A 755-amino-acid chain; its full sequence is Diamine oxidase [copper-containing] (755 aa).

A signal peptide spans 1-24; the sequence is MGRGTLALGWAGAALLLLQMLAAA. Residue asparagine 115 is glycosylated (N-linked (GlcNAc...) asparagine). A disulfide bridge connects residues cysteine 182 and cysteine 186. The active-site Proton acceptor is aspartate 376. Cysteine 394 and cysteine 420 are joined by a disulfide. Catalysis depends on tyrosine 464, which acts as the Schiff-base intermediate with substrate; via topaquinone. Tyrosine 464 is subject to 2',4',5'-topaquinone. Residues histidine 513 and histidine 515 each coordinate Cu(2+). Residues aspartate 522, leucine 523, and aspartate 524 each contribute to the Ca(2+) site. Asparagine 541 is a glycosylation site (N-linked (GlcNAc...) asparagine). Ca(2+) is bound by residues glutamate 565, phenylalanine 656, asparagine 659, glutamate 661, aspartate 667, and leucine 668. Cu(2+) is bound at residue histidine 678. Asparagine 749 carries N-linked (GlcNAc...) asparagine glycosylation.

This sequence belongs to the copper/topaquinone oxidase family. As to quaternary structure, homodimer; disulfide-linked. The cofactor is Cu(2+). Requires Ca(2+) as cofactor. L-topaquinone serves as cofactor. In terms of processing, topaquinone (TPQ) is generated by copper-dependent autoxidation of a specific tyrosyl residue. Post-translationally, N-glycosylated; the glycans are primarily linear, di-, or tribranched fucosylated complex type.

It is found in the secreted. It localises to the extracellular space. The protein localises to the cell membrane. It carries out the reaction histamine + O2 + H2O = imidazole-4-acetaldehyde + H2O2 + NH4(+). The catalysed reaction is N(tau)-methylhistamine + O2 + H2O = 1-methylimidazole-4-acetaldehyde + H2O2 + NH4(+). It catalyses the reaction putrescine + O2 + H2O = 4-aminobutanal + H2O2 + NH4(+). The enzyme catalyses cadaverine + O2 + H2O = 5-aminopentanal + H2O2 + NH4(+). Inhibited by amiloride and amiloride analogs. Its function is as follows. Catalyzes the oxidative deamination of primary amines to the corresponding aldehydes with the concomitant production of hydrogen peroxide and ammonia. Its preferred substrates in vitro are the diamines histamine and 1-methylhistamine and it could therefore play a role in allergic and immune responses. Has a broad specificity for diamines and can also act on cadaverine and putrescine, two products of amino acid catabolism. It could also act on polyamines, like spermidine and spermine though less efficiently, and regulate various biological processes. This chain is Diamine oxidase [copper-containing], found in Sus scrofa (Pig).